Reading from the N-terminus, the 562-residue chain is Phosphoglucomutase-1 (562 aa).

Met1 is modified (N-acetylmethionine). Lys16 carries the N6-acetyllysine modification. Arg23 provides a ligand contact to alpha-D-glucose 1,6-bisphosphate. Thr115 carries the post-translational modification Phosphothreonine. Ser117 is a binding site for alpha-D-glucose 1,6-bisphosphate. The active-site Phosphoserine intermediate is the Ser117. A Mg(2+)-binding site is contributed by Ser117. A phosphoserine mark is found at Ser117 and Ser134. Thr185 carries the post-translational modification Phosphothreonine. Ser213 bears the Phosphoserine mark. 3 residues coordinate Mg(2+): Asp288, Asp290, and Asp292. Alpha-D-glucose 1,6-bisphosphate is bound by residues Asp292 and Arg293. Lys349 carries the N6-acetyllysine modification. At Tyr353 the chain carries Phosphotyrosine. Alpha-D-glucose 1,6-bisphosphate is bound at residue Thr357. Ser369 is modified (phosphoserine). Alpha-D-glucose 1,6-bisphosphate contacts are provided by Glu376, Ser378, and Lys389. Ser378 bears the Phosphoserine mark. The residue at position 419 (Lys419) is an N6-succinyllysine. Thr467 carries the phosphothreonine; by PAK1 modification. Ser485 and Ser505 each carry phosphoserine. Thr507 is modified (phosphothreonine). 2 positions are modified to phosphoserine: Ser509 and Ser541.

The protein belongs to the phosphohexose mutase family. In terms of assembly, monomer. Mg(2+) is required as a cofactor. Isoform 2 is the major calmodulin-dependent phosphoprotein in junctional skeletal sarcoplasmic reticulum vesicles. Post-translationally, phosphorylation at Thr-467 by PAK1 significantly enhances enzymatic activity.

Its subcellular location is the cytoplasm. The protein resides in the sarcoplasmic reticulum. The catalysed reaction is alpha-D-glucose 1-phosphate = alpha-D-glucose 6-phosphate. It catalyses the reaction O-phospho-L-seryl-[protein] + alpha-D-glucose 1-phosphate = alpha-D-glucose 1,6-bisphosphate + L-seryl-[protein]. It carries out the reaction alpha-D-glucose 1,6-bisphosphate + L-seryl-[protein] = O-phospho-L-seryl-[protein] + alpha-D-glucose 6-phosphate. With respect to regulation, glucose-1,6-bisphosphate enhances phosphorylation of the active site Ser-117, and thereby increases enzyme activity. Its function is as follows. Catalyzes the reversible isomerization of alpha-D-glucose 1-phosphate to alpha-D-glucose 6-phosphate. The mechanism proceeds via the intermediate compound alpha-D-glucose 1,6-bisphosphate. This enzyme participates in both the breakdown and synthesis of glucose. This is Phosphoglucomutase-1 (PGM1) from Oryctolagus cuniculus (Rabbit).